Consider the following 284-residue polypeptide: T-cell leukemia homeobox protein 2 (284 aa).

Disordered stretches follow at residues Met1 to Phe50, Gly78 to Gly106, and Phe139 to Arg166. The span at Thr30 to Phe50 shows a compositional bias: gly residues. The segment covering Arg87–Gly96 has biased composition (pro residues). A DNA-binding region (homeobox) is located at residues Arg157–Thr216.

The protein localises to the nucleus. Functionally, transcription activator that binds DNA elements with the consensus sequence 5'-CGGTAATTGG-3'. Binds DNA via its homeobox. Required for normal cell death of enteric neurons in the gastrointestinal tract. Required for normal development of the enteric nervous system, and for proper development of normal motility of the gastrointestinal tract. The protein is T-cell leukemia homeobox protein 2 (TLX2) of Homo sapiens (Human).